The following is a 414-amino-acid chain: Serine/threonine transporter SstT (414 aa).

Over 2–15 (TTQRSPGLFRRLAH) the chain is Cytoplasmic. The helical transmembrane segment at 16–36 (GSLVKQILVGLVLGILLAWIS) threads the bilayer. Residues 37–45 (KPAAEAVGL) are Periplasmic-facing. A helical membrane pass occupies residues 46 to 66 (LGTLFVGALKAVAPILVLMLV). The Cytoplasmic portion of the chain corresponds to 67 to 83 (MASIANHQHGQKTNIRP). Residues 84–104 (ILFLYLLGTFSAALAAVVFSF) traverse the membrane as a helical segment. At 105 to 142 (AFPSTLHLSSSAGDISPPSGIVEVMRGLVMSMVSNPID) the chain is on the periplasmic side. A helical membrane pass occupies residues 143–163 (ALLKGNYIGILVWAIGLGFAL). The Cytoplasmic portion of the chain corresponds to 164 to 179 (RHGNETTKNLVNDLSN). A helical transmembrane segment spans residues 180-200 (AVTFMVKLVIRFAPIGIFGLV). Residues 201–217 (SSTLATTGFSTLWGYAQ) are Periplasmic-facing. A helical membrane pass occupies residues 218–238 (LLVVLVGCMLLVALVVNPLLV). Residues 239–299 (WWKIRRNPFP…VSIPLGATIN (61 aa)) lie on the Cytoplasmic side of the membrane. Residues 300–320 (MAGAAITITVLTLAAVNTLGI) traverse the membrane as a helical segment. The Periplasmic segment spans residues 321 to 331 (PVDLPTALLLS). The chain crosses the membrane as a helical span at residues 332-352 (VVASLCACGASGVAGGSLLLI). The Cytoplasmic segment spans residues 353-414 (PLACNMFGIS…DRLANSALRN (62 aa)).

This sequence belongs to the dicarboxylate/amino acid:cation symporter (DAACS) (TC 2.A.23) family.

Its subcellular location is the cell inner membrane. The enzyme catalyses L-serine(in) + Na(+)(in) = L-serine(out) + Na(+)(out). It catalyses the reaction L-threonine(in) + Na(+)(in) = L-threonine(out) + Na(+)(out). In terms of biological role, involved in the import of serine and threonine into the cell, with the concomitant import of sodium (symport system). This is Serine/threonine transporter SstT from Shigella boydii serotype 4 (strain Sb227).